Here is a 135-residue protein sequence, read N- to C-terminus: Histone H2A (135 aa).

The disordered stretch occupies residues 1–24 (MTGGGKSGGKASSGKNAQSRSSKA). Lysine 6 and lysine 10 each carry N6-acetyllysine. Residue glutamine 107 is modified to N5-methylglutamine. Position 132 is a phosphoserine (serine 132). The [ST]-Q motif signature appears at 132–133 (SQ).

It belongs to the histone H2A family. In terms of assembly, the nucleosome is a histone octamer containing two molecules each of H2A, H2B, H3 and H4 assembled in one H3-H4 heterotetramer and two H2A-H2B heterodimers. The octamer wraps approximately 147 bp of DNA. Phosphorylated to form H2AS128ph (gamma-H2A) in response to DNA double-strand breaks (DSBs) generated by exogenous genotoxic agents and by stalled replication forks. Phosphorylation is dependent on the DNA damage checkpoint kinases MEC1/ATR and TEL1/ATM, spreads on either side of a detected DSB site and may mark the surrounding chromatin for recruitment of proteins required for DNA damage signaling and repair. Gamma-H2A is removed from the DNA prior to the strand invasion-primer extension step of the repair process and subsequently dephosphorylated. Dephosphorylation is necessary for efficient recovery from the DNA damage checkpoint. In terms of processing, acetylated by ESA1 to form H2AK4ac and H2AK7ac.

Its subcellular location is the nucleus. It is found in the chromosome. Its function is as follows. Core component of nucleosome which plays a central role in DNA double strand break (DSB) repair. Nucleosomes wrap and compact DNA into chromatin, limiting DNA accessibility to the cellular machineries which require DNA as a template. Histones thereby play a central role in transcription regulation, DNA repair, DNA replication and chromosomal stability. DNA accessibility is regulated via a complex set of post-translational modifications of histones, also called histone code, and nucleosome remodeling. This chain is Histone H2A (HTA1), found in Podospora anserina (Pleurage anserina).